A 259-amino-acid polypeptide reads, in one-letter code: uncharacterized protein (259 aa).

The interval 171–259 (LSKMPVPQSP…SYSTYEDDDF (89 aa)) is disordered. The segment covering 179–201 (SPSVPTMPSVNNDQPTQKPNKIT) has biased composition (polar residues). Basic residues predominate over residues 202 to 211 (RNYKPKHQHN). A compositionally biased stretch (polar residues) spans 212–236 (YKPNYQPNYQPNYGQNCSNSHSNDY).

It localises to the virion. This is an uncharacterized protein from Acanthamoeba polyphaga (Amoeba).